We begin with the raw amino-acid sequence, 699 residues long: MRDFLHSQQQQQRYGIRRLLVLSGESSWCEEQAMVLSSQSAGDWLWVSEHAPDSVASLPASRVRTLLGREFHHAVFDARSGVDVEALAMLSGTLRAGSWLIMLVPSWQVWSTLPDEDSLRWSEHAQPIATPHFIQHFQRQLLADDDVVLWQQGQPLVIQPLAVRSDWQPAQGEPTARQQQILHELSAAESGVFVITAPRGRGKSTLAGMLTQRSRGTCWITAPSRSATDILQQYARSDAPFWAPDALLAYCRLHGAPDVDWLLIDEVAAIPSSVLTALLPYFPRILMTTTVQGYEGTGRGFLLKFCAALPQCRVFSLDDPLRWAANDPLERVLDQALLFNEPASLHFPLNPTDGALTLPSAKLDIRTECADDWLTHPERLTWCYALLCSAHYRTSPLDLRRLMDAPGMHIASAQVAGDIRGVLWLVEEGGLSDSLAHDVWAGRRRPRGNLVAQSLAAHAGLWNAPTLRARRVSRIAVASSSRRQGIGRALIADQTREAQKQALDYLSVSFGYQPDLWAFWQSCGFQLVRIGSHLEASSGCYSAMAILPLSEAGYELAQQGSQQLARDWYWLQRMIPLNLALPQTENIERDTESIALNDDDWRELAGFAFAHRPMEASFAAICRLLIHTSLPLPALRLLAETPSEGEQTAATLGLTGKKALLKRWREETTSALIELDAQRGERWRLWVLPDDAAEDALHP.

ATP-binding positions include glutamine 178, 200-209 (GRGKSTLAGM), and arginine 322. The N-acetyltransferase domain occupies 408 to 547 (MHIASAQVAG…SGCYSAMAIL (140 aa)). Residues 475–477 (IAV) and 482–488 (RRQGIGR) contribute to the acetyl-CoA site.

It belongs to the RNA cytidine acetyltransferase family. TmcA subfamily.

The protein localises to the cytoplasm. It catalyses the reaction cytidine(34) in elongator tRNA(Met) + acetyl-CoA + ATP + H2O = N(4)-acetylcytidine(34) in elongator tRNA(Met) + ADP + phosphate + CoA + H(+). In terms of biological role, catalyzes the formation of N(4)-acetylcytidine (ac(4)C) at the wobble position of tRNA(Met), by using acetyl-CoA as an acetyl donor and ATP (or GTP). This chain is tRNA(Met) cytidine acetyltransferase TmcA, found in Pectobacterium atrosepticum (strain SCRI 1043 / ATCC BAA-672) (Erwinia carotovora subsp. atroseptica).